A 324-amino-acid polypeptide reads, in one-letter code: Glycerol-3-phosphate dehydrogenase [NAD(P)+] (324 aa).

The NADPH site is built by Ser-10, Phe-11, Arg-31, and Lys-106. Residues Lys-106, Gly-134, and Ser-136 each coordinate sn-glycerol 3-phosphate. Ala-138 contacts NADPH. Sn-glycerol 3-phosphate is bound by residues Lys-189, Asp-244, Ser-254, Arg-255, and Asn-256. The active-site Proton acceptor is the Lys-189. An NADPH-binding site is contributed by Arg-255. The NADPH site is built by Ile-279 and Glu-281.

Belongs to the NAD-dependent glycerol-3-phosphate dehydrogenase family.

The protein localises to the cytoplasm. The catalysed reaction is sn-glycerol 3-phosphate + NAD(+) = dihydroxyacetone phosphate + NADH + H(+). It carries out the reaction sn-glycerol 3-phosphate + NADP(+) = dihydroxyacetone phosphate + NADPH + H(+). Its pathway is membrane lipid metabolism; glycerophospholipid metabolism. Catalyzes the reduction of the glycolytic intermediate dihydroxyacetone phosphate (DHAP) to sn-glycerol 3-phosphate (G3P), the key precursor for phospholipid synthesis. In Ehrlichia canis (strain Jake), this protein is Glycerol-3-phosphate dehydrogenase [NAD(P)+].